A 172-amino-acid polypeptide reads, in one-letter code: Shikimate kinase (172 aa).

11–16 (GAGKST) contacts ATP. Residue serine 15 participates in Mg(2+) binding. Positions 33, 57, and 79 each coordinate substrate. Arginine 117 lines the ATP pocket. Arginine 136 is a binding site for substrate. Arginine 153 provides a ligand contact to ATP.

It belongs to the shikimate kinase family. Monomer. Requires Mg(2+) as cofactor.

Its subcellular location is the cytoplasm. It carries out the reaction shikimate + ATP = 3-phosphoshikimate + ADP + H(+). It participates in metabolic intermediate biosynthesis; chorismate biosynthesis; chorismate from D-erythrose 4-phosphate and phosphoenolpyruvate: step 5/7. Functionally, catalyzes the specific phosphorylation of the 3-hydroxyl group of shikimic acid using ATP as a cosubstrate. The chain is Shikimate kinase from Pseudomonas savastanoi pv. phaseolicola (strain 1448A / Race 6) (Pseudomonas syringae pv. phaseolicola (strain 1448A / Race 6)).